The primary structure comprises 206 residues: Small ribosomal subunit protein uS4 (206 aa).

Residues 96-156 (CRLDNVVYRM…EKSLGQLRIV (61 aa)) enclose the S4 RNA-binding domain.

Belongs to the universal ribosomal protein uS4 family. Part of the 30S ribosomal subunit. Contacts protein S5. The interaction surface between S4 and S5 is involved in control of translational fidelity.

In terms of biological role, one of the primary rRNA binding proteins, it binds directly to 16S rRNA where it nucleates assembly of the body of the 30S subunit. Its function is as follows. With S5 and S12 plays an important role in translational accuracy. This Pseudomonas putida (strain ATCC 47054 / DSM 6125 / CFBP 8728 / NCIMB 11950 / KT2440) protein is Small ribosomal subunit protein uS4.